The following is a 379-amino-acid chain: Cytochrome b (379 aa).

The next 4 helical transmembrane spans lie at 33–53 (FGSLLGMCLVIQILTGLFLAM), 77–98 (WLIRYLHANGASMFFICLFIHV), 113–133 (WNIGIILFLTTMATAFVGYVL), and 178–198 (FFAFHFILPFIIAAFALVHLL). Heme b-binding residues include histidine 83 and histidine 97. Histidine 182 and histidine 196 together coordinate heme b. Histidine 201 provides a ligand contact to a ubiquinone. A run of 4 helical transmembrane segments spans residues 226–246 (TKDLLGIFLLLLVLMILALFF), 288–308 (LGGVLALVLSILILAAFPLLN), 320–340 (VTQIIYWIFIANLLVLTWIGG), and 347–367 (FTTIGQIASITYFTIIIILIP).

Belongs to the cytochrome b family. As to quaternary structure, the cytochrome bc1 complex contains 11 subunits: 3 respiratory subunits (MT-CYB, CYC1 and UQCRFS1), 2 core proteins (UQCRC1 and UQCRC2) and 6 low-molecular weight proteins (UQCRH/QCR6, UQCRB/QCR7, UQCRQ/QCR8, UQCR10/QCR9, UQCR11/QCR10 and a cleavage product of UQCRFS1). This cytochrome bc1 complex then forms a dimer. Requires heme b as cofactor.

The protein resides in the mitochondrion inner membrane. Its function is as follows. Component of the ubiquinol-cytochrome c reductase complex (complex III or cytochrome b-c1 complex) that is part of the mitochondrial respiratory chain. The b-c1 complex mediates electron transfer from ubiquinol to cytochrome c. Contributes to the generation of a proton gradient across the mitochondrial membrane that is then used for ATP synthesis. The sequence is that of Cytochrome b (MT-CYB) from Akodon reigi (Reig's grass mouse).